Consider the following 151-residue polypeptide: Deoxyuridine 5'-triphosphate nucleotidohydrolase (151 aa).

Substrate-binding positions include 70-72 (RSG), N83, 87-89 (LID), and M97.

This sequence belongs to the dUTPase family. It depends on Mg(2+) as a cofactor.

It catalyses the reaction dUTP + H2O = dUMP + diphosphate + H(+). It participates in pyrimidine metabolism; dUMP biosynthesis; dUMP from dCTP (dUTP route): step 2/2. Functionally, this enzyme is involved in nucleotide metabolism: it produces dUMP, the immediate precursor of thymidine nucleotides and it decreases the intracellular concentration of dUTP so that uracil cannot be incorporated into DNA. The polypeptide is Deoxyuridine 5'-triphosphate nucleotidohydrolase (Pseudomonas aeruginosa (strain UCBPP-PA14)).